The sequence spans 291 residues: Undecaprenyl-diphosphatase (291 aa).

8 helical membrane passes run 1–21 (MLIL…LTEF), 48–68 (SAFT…AWVF), 99–119 (LHII…DDVI), 123–143 (LFSV…MIIA), 159–179 (INYF…WPGF), 200–220 (SDFT…LSLV), 236–256 (LGFL…LYLI), and 269–289 (IVLV…QGIT).

This sequence belongs to the UppP family.

It localises to the cell membrane. It catalyses the reaction di-trans,octa-cis-undecaprenyl diphosphate + H2O = di-trans,octa-cis-undecaprenyl phosphate + phosphate + H(+). In terms of biological role, catalyzes the dephosphorylation of undecaprenyl diphosphate (UPP). Confers resistance to bacitracin. This chain is Undecaprenyl-diphosphatase, found in Staphylococcus saprophyticus subsp. saprophyticus (strain ATCC 15305 / DSM 20229 / NCIMB 8711 / NCTC 7292 / S-41).